Consider the following 393-residue polypeptide: Probable acetyl-CoA acyltransferase (393 aa).

The active-site Acyl-thioester intermediate is cysteine 88. Residues histidine 349 and cysteine 378 each act as proton acceptor in the active site.

It belongs to the thiolase-like superfamily. Thiolase family.

Its subcellular location is the cytoplasm. The enzyme catalyses 2 acetyl-CoA = acetoacetyl-CoA + CoA. The sequence is that of Probable acetyl-CoA acyltransferase from Staphylococcus aureus (strain COL).